The primary structure comprises 393 residues: Proteasome-activating nucleotidase (393 aa).

Positions 15-53 (DEVQLVRLLEEKIKSLQIEIENLRKELNYYKAEMEKMLS) form a coiled coil. Residues 178-183 (GTGKTM) and Tyr-317 each bind ATP. Positions 365 to 393 (MNDLVEAINKINVKRNKMESMKERREKYS) form a coiled coil. A docks into pockets in the proteasome alpha-ring to cause gate opening region spans residues 391 to 393 (KYS).

Belongs to the AAA ATPase family. In terms of assembly, homohexamer. The hexameric complex has a two-ring architecture resembling a top hat that caps the 20S proteasome core at one or both ends. Upon ATP-binding, the C-terminus of PAN interacts with the alpha-rings of the proteasome core by binding to the intersubunit pockets.

The protein localises to the cytoplasm. ATPase which is responsible for recognizing, binding, unfolding and translocation of substrate proteins into the archaeal 20S proteasome core particle. Is essential for opening the gate of the 20S proteasome via an interaction with its C-terminus, thereby allowing substrate entry and access to the site of proteolysis. Thus, the C-termini of the proteasomal ATPase function like a 'key in a lock' to induce gate opening and therefore regulate proteolysis. Unfolding activity requires energy from ATP hydrolysis, whereas ATP binding alone promotes ATPase-20S proteasome association which triggers gate opening, and supports translocation of unfolded substrates. The protein is Proteasome-activating nucleotidase of Saccharolobus solfataricus (strain ATCC 35092 / DSM 1617 / JCM 11322 / P2) (Sulfolobus solfataricus).